Consider the following 171-residue polypeptide: Small ribosomal subunit protein bS16 (171 aa).

A disordered region spans residues 114-171 (EGGPTTEAAKPKKKAATSGAKKAAKAAEPEAAASEAAEPEAAAAPAEGGEQAESSAES). The segment covering 142–171 (PEAAASEAAEPEAAAAPAEGGEQAESSAES) has biased composition (low complexity).

Belongs to the bacterial ribosomal protein bS16 family.

The protein is Small ribosomal subunit protein bS16 of Mycolicibacterium paratuberculosis (strain ATCC BAA-968 / K-10) (Mycobacterium paratuberculosis).